Here is a 573-residue protein sequence, read N- to C-terminus: Globulin-1 S allele (573 aa).

The segment at residues 1–18 is a signal peptide (or 21); that stretch reads MVSARIVVLLAVLLCAAA. The propeptide occupies 19-86; sequence AVASSWEDDN…DRSGEGSSED (68 aa). Positions 65–102 are disordered; the sequence is EKRQERSRHEADDRSGEGSSEDEREREQEKEEKQKDRR. Cupin type-1 domains are found at residues 104-262 and 311-493; these read YVFD…DRLE and YSLL…EEVD. Residues 288–315 are disordered; the sequence is RHASEGGHGPHWPLPPFGESRGPYSLLD. Residue Asn349 is glycosylated (N-linked (GlcNAc...) asparagine). Disordered regions lie at residues 382 to 416 and 498 to 573; these read PHRQ…EVGQ and SRRE…TARM. A compositionally biased stretch (basic and acidic residues) spans 390–402; sequence ESERERGKGRRSE. Positions 403–413 are enriched in acidic residues; sequence EEEESSEEQEE. Basic and acidic residues-rich tracts occupy residues 525–542 and 549–561; these read EERH…REER and REGR…REEV.

This sequence belongs to the 7S seed storage protein family. Three protein-processing steps occur in the formation of the mature protein from the primary translation product.

This Zea mays (Maize) protein is Globulin-1 S allele (GLB1).